A 505-amino-acid chain; its full sequence is Putative thymidine phosphorylase (505 aa).

The protein belongs to the thymidine/pyrimidine-nucleoside phosphorylase family. Type 2 subfamily.

The enzyme catalyses thymidine + phosphate = 2-deoxy-alpha-D-ribose 1-phosphate + thymine. This is Putative thymidine phosphorylase from Hahella chejuensis (strain KCTC 2396).